A 357-amino-acid polypeptide reads, in one-letter code: Peptide chain release factor 1 (357 aa).

Glutamine 234 carries the post-translational modification N5-methylglutamine.

The protein belongs to the prokaryotic/mitochondrial release factor family. In terms of processing, methylated by PrmC. Methylation increases the termination efficiency of RF1.

The protein localises to the cytoplasm. Peptide chain release factor 1 directs the termination of translation in response to the peptide chain termination codons UAG and UAA. The sequence is that of Peptide chain release factor 1 from Lactococcus lactis subsp. cremoris (strain MG1363).